Consider the following 473-residue polypeptide: uncharacterized protein (473 aa).

The 229-residue stretch at 26–254 (PKLYIASSGV…KMSEIFNSFG (229 aa)) folds into the SET domain.

This is an uncharacterized protein from Schizosaccharomyces pombe (strain 972 / ATCC 24843) (Fission yeast).